Reading from the N-terminus, the 289-residue chain is Glyceraldehyde-3-phosphate dehydrogenase (289 aa).

NAD(+) contacts are provided by aspartate 12 and arginine 57. D-glyceraldehyde 3-phosphate-binding positions include 128–130 (SCT), threonine 159, 188–189 (TG), and arginine 211. The active-site Nucleophile is the cysteine 129.

The protein belongs to the glyceraldehyde-3-phosphate dehydrogenase family. In terms of assembly, homotetramer.

Its subcellular location is the cytoplasm. The enzyme catalyses D-glyceraldehyde 3-phosphate + phosphate + NAD(+) = (2R)-3-phospho-glyceroyl phosphate + NADH + H(+). The protein operates within carbohydrate degradation; glycolysis; pyruvate from D-glyceraldehyde 3-phosphate: step 1/5. The sequence is that of Glyceraldehyde-3-phosphate dehydrogenase (GPD) from Amanita muscaria (Fly agaric).